A 219-amino-acid chain; its full sequence is Membrin-12 (219 aa).

Position 2 is an N-acetylalanine (Ala2). Residues Ala2 to Thr197 are Cytoplasmic-facing. Residues Trp198–Ile215 form a helical; Anchor for type IV membrane protein membrane-spanning segment. Residues Arg216–Arg219 are Vesicular-facing.

Belongs to the GOSR2 family.

It is found in the golgi apparatus membrane. Involved in transport of proteins from the cis/medial-Golgi to the trans-Golgi network. The sequence is that of Membrin-12 (MEMB12) from Arabidopsis thaliana (Mouse-ear cress).